The following is a 393-amino-acid chain: Dual specificity mitogen-activated protein kinase kinase 1 (393 aa).

The interval 1–27 is disordered; it reads MPKKKPTPIQLNPAPDGSAVNGTSSAE. One can recognise a Protein kinase domain in the interval 68–361; sequence FEKISELGAG…LKQLMVHAFI (294 aa). ATP is bound by residues 74–82 and lysine 97; that span reads LGAGNGGVV. Aspartate 190 (proton acceptor) is an active-site residue. Phosphoserine; by RAF is present on residues serine 218 and serine 222. Residues 270–307 form an RAF1-binding region; that stretch reads ELELMFGCQVEGDAAETPPRPRTPGRPLSSYGMDSRPP. At threonine 286 the chain carries Phosphothreonine. The residue at position 292 (threonine 292) is a Phosphothreonine; by MAPK1. The residue at position 298 (serine 298) is a Phosphoserine; by PAK.

The protein belongs to the protein kinase superfamily. STE Ser/Thr protein kinase family. MAP kinase kinase subfamily. As to quaternary structure, found in a complex with at least BRAF, HRAS, MAP2K1, MAPK3/ERK1 and RGS14. Forms a heterodimer with MAP2K2/MEK2. Forms heterodimers with KSR2 which further dimerize to form tetramers. Interacts with KSR1 or KSR2 and BRAF; the interaction with KSR1 or KSR2 mediates KSR1-BRAF or KSR2-BRAF dimerization. Interacts with ARBB2, LAMTOR3, MAPK1/ERK2 and RAF1. Interacts with MAPK1/ERK2. Interacts with MORG1. Interacts with PPARG. Interacts with isoform 1 of VRK2. Interacts with SGK1. Interacts with BIRC6/bruce. Interacts with KAT7; the interaction promotes KAT7 phosphorylation. Interacts with RAF1 and NEK10; the interaction is required for ERK1/2-signaling pathway activation in response to UV irradiation. Interacts with TRAF3IP3. Interacts with MOS. Post-translationally, phosphorylation at Ser-218 and Ser-222 by MAP kinase kinase kinases (BRAF or MEKK1) positively regulates the kinase activity. Also phosphorylated at Thr-292 by MAPK1/ERK2 and at Ser-298 by PAK. MAPK1/ERK2 phosphorylation of Thr-292 occurs in response to cellular adhesion and leads to inhibition of Ser-298 phosphorylation by PAK. Autophosphorylated at Ser-218 and Ser-222, autophosphosphorylation is promoted by NEK10 following UV irradiation.

The protein resides in the cytoplasm. It is found in the cytoskeleton. It localises to the microtubule organizing center. Its subcellular location is the centrosome. The protein localises to the spindle pole body. The protein resides in the nucleus. It is found in the membrane. It catalyses the reaction L-seryl-[protein] + ATP = O-phospho-L-seryl-[protein] + ADP + H(+). It carries out the reaction L-threonyl-[protein] + ATP = O-phospho-L-threonyl-[protein] + ADP + H(+). The enzyme catalyses L-tyrosyl-[protein] + ATP = O-phospho-L-tyrosyl-[protein] + ADP + H(+). Its activity is regulated as follows. Ras proteins such as HRAS mediate the activation of RAF proteins such as RAF1 or BRAF which in turn activate extracellular signal-regulated kinases (ERK) through MAPK (mitogen-activated protein kinases) and ERK kinases MAP2K1/MEK1 and MAP2K2/MEK2. Activation occurs through phosphorylation of Ser-218 and Ser-222. MAP2K1/MEK1 binds KSR1 or KSR2 releasing the inhibitory intramolecular interaction between KSR1 or KSR2 protein kinase and N-terminal domains. This allows KSR1 or KSR2 dimerization with BRAF leading to BRAF activation and phosphorylation of MAP2K1. MAP2K1/MEK1 is also the target of negative feed-back regulation by its substrate kinases, such as MAPK1/ERK2. These phosphorylate MAP2K1/MEK1 on Thr-292, thereby facilitating dephosphorylation of the activating residues Ser-218 and Ser-222. Inhibited by serine/threonine phosphatase 2A. Functionally, dual specificity protein kinase which acts as an essential component of the MAP kinase signal transduction pathway. Binding of extracellular ligands such as growth factors, cytokines and hormones to their cell-surface receptors activates RAS and this initiates RAF1 activation. RAF1 then further activates the dual-specificity protein kinases MAP2K1/MEK1 and MAP2K2/MEK2. Both MAP2K1/MEK1 and MAP2K2/MEK2 function specifically in the MAPK/ERK cascade, and catalyze the concomitant phosphorylation of a threonine and a tyrosine residue in a Thr-Glu-Tyr sequence located in the extracellular signal-regulated kinases MAPK3/ERK1 and MAPK1/ERK2, leading to their activation and further transduction of the signal within the MAPK/ERK cascade. Activates BRAF in a KSR1 or KSR2-dependent manner; by binding to KSR1 or KSR2 releases the inhibitory intramolecular interaction between KSR1 or KSR2 protein kinase and N-terminal domains which promotes KSR1 or KSR2-BRAF dimerization and BRAF activation. Depending on the cellular context, this pathway mediates diverse biological functions such as cell growth, adhesion, survival and differentiation, predominantly through the regulation of transcription, metabolism and cytoskeletal rearrangements. One target of the MAPK/ERK cascade is peroxisome proliferator-activated receptor gamma (PPARG), a nuclear receptor that promotes differentiation and apoptosis. MAP2K1/MEK1 has been shown to export PPARG from the nucleus. The MAPK/ERK cascade is also involved in the regulation of endosomal dynamics, including lysosome processing and endosome cycling through the perinuclear recycling compartment (PNRC), as well as in the fragmentation of the Golgi apparatus during mitosis. This chain is Dual specificity mitogen-activated protein kinase kinase 1 (MAP2K1), found in Pan troglodytes (Chimpanzee).